A 112-amino-acid chain; its full sequence is Protein FAM32A (112 aa).

Residues 15–35 (KGCGDMSLGKKKKKKNKANDQ) are disordered.

Belongs to the FAM32 family.

The protein localises to the nucleus. Its function is as follows. May induce G2 arrest and apoptosis. May also increase cell sensitivity to apoptotic stimuli. The protein is Protein FAM32A (fam32a) of Xenopus tropicalis (Western clawed frog).